Here is a 337-residue protein sequence, read N- to C-terminus: tRNA N6-adenosine threonylcarbamoyltransferase (337 aa).

His111 and His115 together coordinate Fe cation. Substrate contacts are provided by residues 134–138 (LVSGG), Asp167, Gly180, and Asn272. A Fe cation-binding site is contributed by Asp300.

It belongs to the KAE1 / TsaD family. It depends on Fe(2+) as a cofactor.

It is found in the cytoplasm. The enzyme catalyses L-threonylcarbamoyladenylate + adenosine(37) in tRNA = N(6)-L-threonylcarbamoyladenosine(37) in tRNA + AMP + H(+). Its function is as follows. Required for the formation of a threonylcarbamoyl group on adenosine at position 37 (t(6)A37) in tRNAs that read codons beginning with adenine. Is involved in the transfer of the threonylcarbamoyl moiety of threonylcarbamoyl-AMP (TC-AMP) to the N6 group of A37, together with TsaE and TsaB. TsaD likely plays a direct catalytic role in this reaction. The sequence is that of tRNA N6-adenosine threonylcarbamoyltransferase from Shewanella woodyi (strain ATCC 51908 / MS32).